The primary structure comprises 571 residues: Kinesin light chain (571 aa).

Residues 54–160 (LLTSMKTIRK…KKHLEFMNEM (107 aa)) adopt a coiled-coil conformation. The segment covering 167 to 177 (EAQVNEEKESE) has biased composition (basic and acidic residues). Residues 167 to 210 (EAQVNEEKESEQSSLDLGFPDDDDDGGQPEVLSPTQPSAMAQAA) form a disordered region. 6 TPR repeats span residues 220–253 (LRTLHNLVIQYASQGRYEVAVPLCKQALEDLEKT), 262–295 (ATMLNILALVYRDQGKYKEAANLLNDALGIREKT), 304–337 (AATLNNLAVLYGKRGKYKDAEPLCKRALVIREKV), 346–379 (AKQLNNLALLCQNQGKYEEVERYYQRALEIYQKE), 388–421 (AKTKNNLASAYLKQGKYKQAEILYKEVLTRAHEK), and 471–504 (TTTLKNLGALYRRQGKYEAAETLEECALRSRKSA). The disordered stretch occupies residues 518-571 (GSDFSKGQSPKDRKRSNSRDRNRRDSMDSVSYEKSGDGDEHEKSKLHVGTSHKQ). 2 stretches are compositionally biased toward basic and acidic residues: residues 526-544 (SPKDRKRSNSRDRNRRDSM) and 551-562 (KSGDGDEHEKSK).

The protein belongs to the kinesin light chain family. In terms of assembly, oligomeric complex composed of two heavy chains and two light chains.

The protein resides in the cytoplasm. It localises to the cytoskeleton. Kinesin is a microtubule-associated force-producing protein that may play a role in organelle transport. The light chain may function in coupling of cargo to the heavy chain or in the modulation of its ATPase activity. The polypeptide is Kinesin light chain (Doryteuthis pealeii (Longfin inshore squid)).